The primary structure comprises 333 residues: 4-hydroxy-3-methylbut-2-enyl diphosphate reductase (333 aa).

Cys-20 provides a ligand contact to [4Fe-4S] cluster. Residues His-49 and His-82 each coordinate (2E)-4-hydroxy-3-methylbut-2-enyl diphosphate. Residues His-49 and His-82 each coordinate dimethylallyl diphosphate. Residues His-49 and His-82 each coordinate isopentenyl diphosphate. Residue Cys-104 participates in [4Fe-4S] cluster binding. His-132 is a binding site for (2E)-4-hydroxy-3-methylbut-2-enyl diphosphate. A dimethylallyl diphosphate-binding site is contributed by His-132. Isopentenyl diphosphate is bound at residue His-132. Glu-134 serves as the catalytic Proton donor. Residue Thr-172 coordinates (2E)-4-hydroxy-3-methylbut-2-enyl diphosphate. A [4Fe-4S] cluster-binding site is contributed by Cys-202. (2E)-4-hydroxy-3-methylbut-2-enyl diphosphate-binding residues include Ser-230, Ser-231, Asn-232, and Ser-274. Residues Ser-230, Ser-231, Asn-232, and Ser-274 each contribute to the dimethylallyl diphosphate site. Positions 230, 231, 232, and 274 each coordinate isopentenyl diphosphate.

This sequence belongs to the IspH family. Requires [4Fe-4S] cluster as cofactor.

The catalysed reaction is isopentenyl diphosphate + 2 oxidized [2Fe-2S]-[ferredoxin] + H2O = (2E)-4-hydroxy-3-methylbut-2-enyl diphosphate + 2 reduced [2Fe-2S]-[ferredoxin] + 2 H(+). It carries out the reaction dimethylallyl diphosphate + 2 oxidized [2Fe-2S]-[ferredoxin] + H2O = (2E)-4-hydroxy-3-methylbut-2-enyl diphosphate + 2 reduced [2Fe-2S]-[ferredoxin] + 2 H(+). It participates in isoprenoid biosynthesis; dimethylallyl diphosphate biosynthesis; dimethylallyl diphosphate from (2E)-4-hydroxy-3-methylbutenyl diphosphate: step 1/1. The protein operates within isoprenoid biosynthesis; isopentenyl diphosphate biosynthesis via DXP pathway; isopentenyl diphosphate from 1-deoxy-D-xylulose 5-phosphate: step 6/6. In terms of biological role, catalyzes the conversion of 1-hydroxy-2-methyl-2-(E)-butenyl 4-diphosphate (HMBPP) into a mixture of isopentenyl diphosphate (IPP) and dimethylallyl diphosphate (DMAPP). Acts in the terminal step of the DOXP/MEP pathway for isoprenoid precursor biosynthesis. The polypeptide is 4-hydroxy-3-methylbut-2-enyl diphosphate reductase (Polaromonas sp. (strain JS666 / ATCC BAA-500)).